The chain runs to 620 residues: 1-deoxy-D-xylulose-5-phosphate synthase (620 aa).

Thiamine diphosphate is bound by residues H80 and 121 to 123; that span reads GHS. D152 contacts Mg(2+). Thiamine diphosphate is bound by residues 153-154, N181, Y288, and E370; that span reads GA. A Mg(2+)-binding site is contributed by N181.

Belongs to the transketolase family. DXPS subfamily. As to quaternary structure, homodimer. Requires Mg(2+) as cofactor. Thiamine diphosphate serves as cofactor.

It carries out the reaction D-glyceraldehyde 3-phosphate + pyruvate + H(+) = 1-deoxy-D-xylulose 5-phosphate + CO2. Its pathway is metabolic intermediate biosynthesis; 1-deoxy-D-xylulose 5-phosphate biosynthesis; 1-deoxy-D-xylulose 5-phosphate from D-glyceraldehyde 3-phosphate and pyruvate: step 1/1. In terms of biological role, catalyzes the acyloin condensation reaction between C atoms 2 and 3 of pyruvate and glyceraldehyde 3-phosphate to yield 1-deoxy-D-xylulose-5-phosphate (DXP). The protein is 1-deoxy-D-xylulose-5-phosphate synthase of Sodalis glossinidius (strain morsitans).